The following is a 500-amino-acid chain: L-arabinose isomerase (500 aa).

Glutamate 306, glutamate 333, histidine 350, and histidine 450 together coordinate Mn(2+).

Belongs to the arabinose isomerase family. In terms of assembly, homohexamer. Requires Mn(2+) as cofactor.

It catalyses the reaction beta-L-arabinopyranose = L-ribulose. The protein operates within carbohydrate degradation; L-arabinose degradation via L-ribulose; D-xylulose 5-phosphate from L-arabinose (bacterial route): step 1/3. In terms of biological role, catalyzes the conversion of L-arabinose to L-ribulose. This is L-arabinose isomerase from Escherichia coli O7:K1 (strain IAI39 / ExPEC).